A 76-amino-acid chain; its full sequence is Sulfur carrier protein TusA (76 aa).

Cys-14 (cysteine persulfide intermediate) is an active-site residue.

Belongs to the sulfur carrier protein TusA family. Interacts with IscS.

It is found in the cytoplasm. Its pathway is tRNA modification. Sulfur carrier protein involved in sulfur trafficking in the cell. Part of a sulfur-relay system required for 2-thiolation during synthesis of 2-thiouridine of the modified wobble base 5-methylaminomethyl-2-thiouridine (mnm(5)s(2)U) in tRNA. Interacts with IscS and stimulates its cysteine desulfurase activity. Accepts an activated sulfur from IscS, which is then transferred to TusD, and thus determines the direction of sulfur flow from IscS to 2-thiouridine formation. Also appears to be involved in sulfur transfer for the biosynthesis of molybdopterin. The polypeptide is Sulfur carrier protein TusA (Buchnera aphidicola subsp. Acyrthosiphon pisum (strain Tuc7)).